The chain runs to 353 residues: Paraneoplastic antigen Ma1 homolog (353 aa).

Belongs to the PNMA family.

It is found in the nucleus. The protein resides in the nucleolus. The polypeptide is Paraneoplastic antigen Ma1 homolog (PNMA1) (Bos taurus (Bovine)).